The sequence spans 375 residues: MSCPVIELAQQLIKRPSLSPNDEGCQALMIERLTAIGFTVEAMDFGDTQNFWAWRGTGKTLAFAGHTDVVPSGDESHWQHPPFEPIIRDGMLYGRGAADMKGSLAAMVIAAERFVAAHPNHQGRLAFLITSDEEASAVNGTVKVVDALMARNERLDYCLVGEPSSTHVVGDVVKNGRRGSITANLRIHGMQGHVAYPHLADNPVHRAAPALNELIATEWDRGNDFFPPTTMQIANIQAGTGSNNVIPGELFVQFNFRFSTELTDVLIQQRVAELLDRHQLNYTIDWKLSGQPFLTARGELVDAVVNAVKHYNEVTPELLTNGGTSDGRFIARMGAQVVELGPINATIHKVDECVSAADLQLLSRMYQRIMEQLIA.

His66 is a binding site for Zn(2+). Asp68 is a catalytic residue. Asp99 is a binding site for Zn(2+). Glu133 (proton acceptor) is an active-site residue. Zn(2+) contacts are provided by Glu134, Glu162, and His348.

This sequence belongs to the peptidase M20A family. DapE subfamily. As to quaternary structure, homodimer. It depends on Zn(2+) as a cofactor. Co(2+) is required as a cofactor.

The enzyme catalyses N-succinyl-(2S,6S)-2,6-diaminopimelate + H2O = (2S,6S)-2,6-diaminopimelate + succinate. It participates in amino-acid biosynthesis; L-lysine biosynthesis via DAP pathway; LL-2,6-diaminopimelate from (S)-tetrahydrodipicolinate (succinylase route): step 3/3. In terms of biological role, catalyzes the hydrolysis of N-succinyl-L,L-diaminopimelic acid (SDAP), forming succinate and LL-2,6-diaminopimelate (DAP), an intermediate involved in the bacterial biosynthesis of lysine and meso-diaminopimelic acid, an essential component of bacterial cell walls. The sequence is that of Succinyl-diaminopimelate desuccinylase from Pectobacterium atrosepticum (strain SCRI 1043 / ATCC BAA-672) (Erwinia carotovora subsp. atroseptica).